The chain runs to 290 residues: MDLFSPAKLNLFLKLHGKTSHGFHEMTTQYQVIDFGDNLYLESSNEDSLVCNLPELNTPQNLIWKSLQVFRDYTQIRSPVAWRLHKRIPIGAGVGGGSSNAATALYALNEHFQTQLPNSVLQELGKKIGMDVPLFFSSGSAIGVGCGEKILPYKDCKREERFVLYFSDQGVLTKDAFSYVRSEDFSQREENISLYKKENDLEKSVFRFRRDLEEKKQMLKKMWSPFHAHVCMSGAGATLFVSYPRKLEIDPSIAKAIHATIQNSQGVLVNSLRKHSGWFPCPDNLFATTR.

Residue lysine 8 is part of the active site. 89 to 99 (PIGAGVGGGSS) contributes to the ATP binding site. The active site involves aspartate 131.

This sequence belongs to the GHMP kinase family. IspE subfamily.

The enzyme catalyses 4-CDP-2-C-methyl-D-erythritol + ATP = 4-CDP-2-C-methyl-D-erythritol 2-phosphate + ADP + H(+). The protein operates within isoprenoid biosynthesis; isopentenyl diphosphate biosynthesis via DXP pathway; isopentenyl diphosphate from 1-deoxy-D-xylulose 5-phosphate: step 3/6. In terms of biological role, catalyzes the phosphorylation of the position 2 hydroxy group of 4-diphosphocytidyl-2C-methyl-D-erythritol. This Chlamydia felis (strain Fe/C-56) (Chlamydophila felis) protein is 4-diphosphocytidyl-2-C-methyl-D-erythritol kinase.